The sequence spans 784 residues: Replication protein A 70 kDa DNA-binding subunit E (784 aa).

Positions 114 to 224 are disordered; it reads HPVPGGKHND…NRGPVARNEA (111 aa). Composition is skewed to polar residues over residues 132-148 and 167-190; these read KFNT…QVNN and SSVP…NGVT. Positions 241–327 form a DNA-binding region, OB; it reads WTIKARVTNK…RNDYEIMLDN (87 aa). The C4-type zinc-finger motif lies at 532 to 558; it reads CPIMNGDRPCSKKVTDNGDGTWRCEKC. Disordered regions lie at residues 678–707 and 746–784; these read LPIN…PSSV and AKCP…VGSY. Residues 695–707 show a composition bias toward polar residues; it reads GIGSSGTRDPSSV. Positions 760-776 are enriched in gly residues; sequence YMGGSYRGTTGSYGGGL.

The protein belongs to the replication factor A protein 1 family. As to quaternary structure, heterotrimer of RPA1, RPA2 and RPA3 (canonical replication protein A complex).

It localises to the nucleus. Functionally, component of the replication protein A complex (RPA) required for DNA recombination, repair and replication. The activity of RPA is mediated by single-stranded DNA binding and protein interactions. Probably involved in repair of double-strand DNA breaks (DSBs) induced by genotoxic stresses. This Arabidopsis thaliana (Mouse-ear cress) protein is Replication protein A 70 kDa DNA-binding subunit E (RPA1E).